A 717-amino-acid chain; its full sequence is Coupling protein TraD (717 aa).

The Cytoplasmic portion of the chain corresponds to 1-27 (MSFNAKDMTQGGQIASMRIRMFSQIAN). Residues 28–47 (IMLYCLFIFFWILVGLVLWI) form a helical membrane-spanning segment. Over 48–104 (KISWQTFVNGCIYWWCTTLEGMRDLIKSQPVYEIQYYGKTFRMNAAQVLHDKYMIWC) the chain is Periplasmic. The helical transmembrane segment at 105 to 130 (SEQLWSAFVLAAVVALVICLITFFVV) threads the bilayer. Over 131-717 (SWILGRQGKQ…GEDVEPGDDF (587 aa)) the chain is Cytoplasmic. 192–199 (GTVGAGKS) provides a ligand contact to ATP. 2 disordered regions span residues 614 to 639 (EDVTQAEQPQQPVSPAINDKKSDSGV) and 650 to 669 (LKMKPEEEMEQQLPPGISES).

The protein belongs to the TrwB coupling protein family. In terms of assembly, interacts with relaxosome component TraM. May form a hexamer in the membrane.

It localises to the cell inner membrane. Functionally, conjugative DNA transfer (CDT) is the unidirectional transfer of ssDNA plasmid from a donor to a recipient cell. It is the central mechanism by which antibiotic resistance and virulence factors are propagated in bacterial populations. Couples the transferosome to a type IV secretion system. Probably forms a pore through which single-stranded plasmid DNA is transferred to the secretion system. The last 37 residues are important for determining plasmid specificity and transfer efficiency, with additional specificity conferred by the TraD-TraM pair. The protein is Coupling protein TraD (traD) of Escherichia coli (strain K12).